A 365-amino-acid polypeptide reads, in one-letter code: Poly(rC)-binding protein 2 (365 aa).

2 KH domains span residues 13 to 75 and 97 to 162; these read TLTI…FAMI and PVTL…VKQI. Lys115 participates in a covalent cross-link: Glycyl lysine isopeptide (Lys-Gly) (interchain with G-Cter in SUMO2). At Ser173 the chain carries Phosphoserine. Lys185 participates in a covalent cross-link: Glycyl lysine isopeptide (Lys-Gly) (interchain with G-Cter in SUMO2). Residues Ser189 and Ser272 each carry the phosphoserine modification. Residues 287-351 form the KH 3 domain; that stretch reads TTSHELTIPN…ASISLAQYLI (65 aa). Residue Lys322 forms a Glycyl lysine isopeptide (Lys-Gly) (interchain with G-Cter in SUMO2) linkage. A phosphoserine mark is found at Ser364 and Ser365.

Identified in a mRNP complex, at least composed of DHX9, DDX3X, ELAVL1, HNRNPU, IGF2BP1, ILF3, PABPC1, PCBP2, PTBP2, STAU1, STAU2, SYNCRIP and YBX1. Interacts with IFIH1 and RNF135. Interacts with MAVS (via C-terminus) and ITCH (via WW domains). Interacts with CGAS; preventing the formation of liquid-like droplets in which CGAS is activated. In terms of processing, phosphorylated. The non-phosphorylated form(s) exhibited the strongest poly(rC)-binding activity. Post-translationally, (Microbial infection) Proteolytically cleaved by picornavirus proteinase 3CD. In terms of tissue distribution, detected in all tissues examined.

The protein resides in the nucleus. Its subcellular location is the cytoplasm. Single-stranded nucleic acid binding protein that binds preferentially to oligo dC. Major cellular poly(rC)-binding protein. Also binds poly(rU). Acts as a negative regulator of antiviral signaling. Negatively regulates cellular antiviral responses mediated by MAVS signaling. It acts as an adapter between MAVS and the E3 ubiquitin ligase ITCH, therefore triggering MAVS ubiquitination and degradation. Negativeley regulates the cGAS-STING pathway via interaction with CGAS, preventing the formation of liquid-like droplets in which CGAS is activated. Together with PCBP1, required for erythropoiesis, possibly by regulating mRNA splicing. Its function is as follows. (Microbial infection) In case of infection by poliovirus, binds to the viral internal ribosome entry site (IRES) and stimulates the IRES-mediated translation. Also plays a role in initiation of viral RNA replication in concert with the viral protein 3CD. This chain is Poly(rC)-binding protein 2, found in Homo sapiens (Human).